The sequence spans 638 residues: Zinc finger protein 143 (638 aa).

Residue Met1 is modified to N-acetylmethionine. Residue Lys213 forms a Glycyl lysine isopeptide (Lys-Gly) (interchain with G-Cter in SUMO2) linkage. 4 C2H2-type zinc fingers span residues Phe237–His261, Tyr267–His291, Tyr297–His321, and Phe327–His351. Residue Thr352 is modified to Phosphothreonine. C2H2-type zinc fingers lie at residues Tyr357–His381, Tyr387–His411, and Tyr417–His440. Lys406 is covalently cross-linked (Glycyl lysine isopeptide (Lys-Gly) (interchain with G-Cter in SUMO2)).

Belongs to the GLI C2H2-type zinc-finger protein family. Interacts with CHD8. Forms a complex with HCFC1 and ZNF143.

It is found in the nucleus. Transcriptional activator. In complex with HCFC1 and ZNF143, regulates the expression of several genes, including AP2S1, ESCO2, OPHN1, RBL1, UBXN8 and ZNF32. Activates the gene for selenocysteine tRNA (tRNAsec). Binds to the SPH motif of small nuclear RNA (snRNA) gene promoters. Participates in efficient U6 RNA polymerase III transcription via its interaction with CHD8. This chain is Zinc finger protein 143 (Znf143), found in Rattus norvegicus (Rat).